The primary structure comprises 371 residues: MSTAERAPILLTPGPLTTSYRTRRAMMVDWGSWDSDFNELTASVCQRLLKIVGGEGSHTCVPLQGSGTFAVEAAIGTLVPRDGKVLVLINGAYGKRLAKICEVLQRPFSTLETEENVPTTAADVERLLAADPAISHVALIHCETSTGILNPLEAIAKVVERHGKRLIVDAMSSFGAIGIDARKVPFDALIAASGKCLEGVPGMGFVFARSAALEASAGNCHSLAMDLQDQHAYMRKTGQWRFTPPTHVVAALHEALSQYEEEGGLPARQRRYASNCETLLGEMARLGFRSFLPAEIQAPIIVTFHAPRDPRYRFADFYQRVREKGFILYPGKLTQVETFRVGCIGHVDAAEMRQAVAAIGEALRELEVLEI.

N6-(pyridoxal phosphate)lysine is present on Lys-195.

This sequence belongs to the class-V pyridoxal-phosphate-dependent aminotransferase family. PhnW subfamily. Homotetramer; however this is for an enzyme with a molecular weight of 16500, which is in disagreement with the weight of this protein. It depends on pyridoxal 5'-phosphate as a cofactor.

The enzyme catalyses (2-aminoethyl)phosphonate + pyruvate = phosphonoacetaldehyde + L-alanine. Its activity is regulated as follows. Inhibited by phosphonic acids and very slightly inhibited by aminophosphonic acids. Its function is as follows. Involved in phosphonate degradation. This Pseudomonas aeruginosa (strain ATCC 15692 / DSM 22644 / CIP 104116 / JCM 14847 / LMG 12228 / 1C / PRS 101 / PAO1) protein is 2-aminoethylphosphonate--pyruvate transaminase (phnW).